Consider the following 468-residue polypeptide: N-acetyltransferase SLI1 (468 aa).

The protein localises to the endoplasmic reticulum. Functionally, confers resistance to the sphingolipid biosynthesis inhibitor drug myriocin (ISP-1). Inactivates ISP-1 by converting it into N-acetyl-myriocin. Cooperates with YPK1 in mediating resistance to myriocin. This is N-acetyltransferase SLI1 (SLI1) from Saccharomyces cerevisiae (strain ATCC 204508 / S288c) (Baker's yeast).